The chain runs to 105 residues: Small ribosomal subunit protein uS10 (105 aa).

It belongs to the universal ribosomal protein uS10 family. Part of the 30S ribosomal subunit.

Its function is as follows. Involved in the binding of tRNA to the ribosomes. The polypeptide is Small ribosomal subunit protein uS10 (Solidesulfovibrio magneticus (strain ATCC 700980 / DSM 13731 / RS-1) (Desulfovibrio magneticus)).